We begin with the raw amino-acid sequence, 225 residues long: NAD(P)H-quinone oxidoreductase subunit K, chloroplastic (225 aa).

Residues cysteine 43, cysteine 44, cysteine 108, and cysteine 139 each coordinate [4Fe-4S] cluster.

This sequence belongs to the complex I 20 kDa subunit family. In terms of assembly, NDH is composed of at least 16 different subunits, 5 of which are encoded in the nucleus. The cofactor is [4Fe-4S] cluster.

It localises to the plastid. The protein resides in the chloroplast thylakoid membrane. The enzyme catalyses a plastoquinone + NADH + (n+1) H(+)(in) = a plastoquinol + NAD(+) + n H(+)(out). It carries out the reaction a plastoquinone + NADPH + (n+1) H(+)(in) = a plastoquinol + NADP(+) + n H(+)(out). In terms of biological role, NDH shuttles electrons from NAD(P)H:plastoquinone, via FMN and iron-sulfur (Fe-S) centers, to quinones in the photosynthetic chain and possibly in a chloroplast respiratory chain. The immediate electron acceptor for the enzyme in this species is believed to be plastoquinone. Couples the redox reaction to proton translocation, and thus conserves the redox energy in a proton gradient. The chain is NAD(P)H-quinone oxidoreductase subunit K, chloroplastic from Lemna minor (Common duckweed).